Here is a 343-residue protein sequence, read N- to C-terminus: Phenylalanine--tRNA ligase alpha subunit (343 aa).

Residue Glu264 coordinates Mg(2+).

This sequence belongs to the class-II aminoacyl-tRNA synthetase family. Phe-tRNA synthetase alpha subunit type 1 subfamily. Tetramer of two alpha and two beta subunits. It depends on Mg(2+) as a cofactor.

The protein resides in the cytoplasm. The catalysed reaction is tRNA(Phe) + L-phenylalanine + ATP = L-phenylalanyl-tRNA(Phe) + AMP + diphosphate + H(+). This chain is Phenylalanine--tRNA ligase alpha subunit, found in Aromatoleum aromaticum (strain DSM 19018 / LMG 30748 / EbN1) (Azoarcus sp. (strain EbN1)).